The following is a 122-amino-acid chain: Large ribosomal subunit protein uL14 (122 aa).

This sequence belongs to the universal ribosomal protein uL14 family. In terms of assembly, part of the 50S ribosomal subunit. Forms a cluster with proteins L3 and L19. In the 70S ribosome, L14 and L19 interact and together make contacts with the 16S rRNA in bridges B5 and B8.

Functionally, binds to 23S rRNA. Forms part of two intersubunit bridges in the 70S ribosome. This chain is Large ribosomal subunit protein uL14, found in Granulibacter bethesdensis (strain ATCC BAA-1260 / CGDNIH1).